The primary structure comprises 143 residues: Nuclear transcription factor Y subunit B-4 (143 aa).

Residues 1–23 (MSEGFDGTENGGGGGGGGVGKEQ) are disordered. Over residues 9 to 20 (ENGGGGGGGGVG) the composition is skewed to gly residues. A DNA-binding region spans residues 27–33 (LPIANIG). The subunit association domain (SAD) stretch occupies residues 54-65 (VQECVSEFISFI). The span at 117–130 (KGSRASELPVKKDV) shows a compositional bias: basic and acidic residues. The segment at 117–143 (KGSRASELPVKKDVVLNGDPGSSFEGM) is disordered.

The protein belongs to the NFYB/HAP3 subunit family. In terms of assembly, heterotrimeric transcription factor composed of three components, NF-YA, NF-YB and NF-YC. NF-YB and NF-YC must interact and dimerize for NF-YA association and DNA binding. In terms of tissue distribution, ubiquitous.

The protein resides in the nucleus. Component of the NF-Y/HAP transcription factor complex. The NF-Y complex stimulates the transcription of various genes by recognizing and binding to a CCAAT motif in promoters. May regulate the expression of photosynthetic genes, and may be involved in chloroplast and amyloplast development. The chain is Nuclear transcription factor Y subunit B-4 (NFYB4) from Oryza sativa subsp. japonica (Rice).